The chain runs to 145 residues: uncharacterized protein (145 aa).

The dksA C4-type zinc-finger motif lies at cysteine 86–cysteine 110.

This is an uncharacterized protein from Aquifex aeolicus (strain VF5).